Here is a 499-residue protein sequence, read N- to C-terminus: Maturase K (499 aa).

Belongs to the intron maturase 2 family. MatK subfamily.

Its subcellular location is the plastid. It localises to the chloroplast. Its function is as follows. Usually encoded in the trnK tRNA gene intron. Probably assists in splicing its own and other chloroplast group II introns. This is Maturase K from Gleditsia triacanthos (Common honey-locust).